Reading from the N-terminus, the 299-residue chain is N-acetylneuraminate lyase (299 aa).

Aceneuramate contacts are provided by Ser-45 and Ser-46. Tyr-134 functions as the Proton donor in the catalytic mechanism. Lys-161 functions as the Schiff-base intermediate with substrate in the catalytic mechanism. Thr-163, Gly-185, Asp-187, and Glu-188 together coordinate aceneuramate.

Belongs to the DapA family. NanA subfamily. In terms of assembly, homotetramer.

Its subcellular location is the cytoplasm. It catalyses the reaction aceneuramate = aldehydo-N-acetyl-D-mannosamine + pyruvate. It participates in amino-sugar metabolism; N-acetylneuraminate degradation; D-fructose 6-phosphate from N-acetylneuraminate: step 1/5. In terms of biological role, catalyzes the reversible aldol cleavage of N-acetylneuraminic acid (sialic acid; Neu5Ac) to form pyruvate and N-acetylmannosamine (ManNAc) via a Schiff base intermediate. The sequence is that of N-acetylneuraminate lyase from Rhizobium meliloti (strain 1021) (Ensifer meliloti).